We begin with the raw amino-acid sequence, 873 residues long: MNPGFDLSRRNPQEDFELIQRIGSGTYGDVYKARNVNTGELAAIKVIKLEPGEDFAVVQQEIIMMKDCKHANIVAYFGSYLRRDKLWICMEFCGGGSLQDIYHVTGPLSELQIAYVSRETLQGLYYLHSKGKMHRDIKGANILLTDNGHVKLADFGVSAQITATIAKRKSFIGTPYWMAPEVAAVERKGGYNQLCDLWAVGITAIELAELQPPMFDLHPMRALFLMTKSNFQPPKLKDKLKWSNSFHHFVKMALTKNPKKRPTAEKLLQHPFVTQPLTRSLAIELLDKVNNPDHSTYHDFDDDDPEPLVAVPHRIPSTSRNVREEKTRSEINFGQVKFDPPLRKETEPHHELDLQLEYGQGHQSNYFLGGNKSLLKSVEEELHQRGHVAHLEDDEGDDDDSKHSTLKAKVPPPLPPKPKSISIPQDTHSSEDSNQGTIKRCPSSGSPAKPSHVPPRPPPPRLPPQKPAVLGNGVSSFQLNGERDGSVHQQQSEQRGTNLSRKEKKDVPKPISNGLPPTPKVHMGACFSKVFNGCPLKIHCATSWINPDTRDQYLIFGAEEGIYTLNLNELHETSMEQLFPRRCTWLYVMNNCLLSVSGKASQLYSHNLPGLFDYARQMQKLPVAIPAHKLPDRILPRKFAVSAKIPETKWCQKCCVVRNPYTGHKYLCGALQTSIVLLEWVEPMQKFMLIKHIEFPMPCPLRMFEMLVVPEQEYPLVCVGVSRGRDFNQVVRFETVNPNSTSSWFTESDTPQTNVTHVTQLERDTILVCLDCCIKIVNLQGRLKSSRKLSSELTFDFQIESIVCLQDSVLAFWKHGMQGRSFRSNEVTQEISDNTRIFRLLGSDRVVVLESRPTDNPTANSNLYILAGHENSY.

N-acetylmethionine is present on methionine 1. In terms of domain architecture, Protein kinase spans 16–273 (FELIQRIGSG…AEKLLQHPFV (258 aa)). ATP is bound by residues 22–30 (IGSGTYGDV) and lysine 45. Aspartate 136 acts as the Proton acceptor in catalysis. A phosphoserine mark is found at serine 329 and serine 377. A disordered region spans residues 389–518 (AHLEDDEGDD…KPISNGLPPT (130 aa)). Over residues 452-466 (HVPPRPPPPRLPPQK) the composition is skewed to pro residues. The span at 487–499 (VHQQQSEQRGTNL) shows a compositional bias: polar residues. The CNH domain occupies 535–846 (PLKIHCATSW…IFRLLGSDRV (312 aa)).

This sequence belongs to the protein kinase superfamily. STE Ser/Thr protein kinase family. STE20 subfamily. As to quaternary structure, interacts with SH3GL2. Interaction appears to regulate MAP4K3-mediated JNK activation. The cofactor is Mg(2+).

It catalyses the reaction L-seryl-[protein] + ATP = O-phospho-L-seryl-[protein] + ADP + H(+). The enzyme catalyses L-threonyl-[protein] + ATP = O-phospho-L-threonyl-[protein] + ADP + H(+). Functionally, serine/threonine kinase that plays a role in the response to environmental stress. Appears to act upstream of the JUN N-terminal pathway. Activator of the Hippo signaling pathway which plays a pivotal role in organ size control and tumor suppression by restricting proliferation and promoting apoptosis. MAP4Ks act in parallel to and are partially redundant with STK3/MST2 and STK4/MST2 in the phosphorylation and activation of LATS1/2, and establish MAP4Ks as components of the expanded Hippo pathway. This chain is Mitogen-activated protein kinase kinase kinase kinase 3 (Map4k3), found in Rattus norvegicus (Rat).